Reading from the N-terminus, the 310-residue chain is Aspartate carbamoyltransferase catalytic subunit (310 aa).

Carbamoyl phosphate is bound by residues arginine 55 and threonine 56. Residue lysine 83 participates in L-aspartate binding. The carbamoyl phosphate site is built by arginine 105, histidine 133, and glutamine 136. Positions 166 and 220 each coordinate L-aspartate. Carbamoyl phosphate-binding residues include glycine 261 and proline 262.

It belongs to the aspartate/ornithine carbamoyltransferase superfamily. ATCase family. Heterododecamer (2C3:3R2) of six catalytic PyrB chains organized as two trimers (C3), and six regulatory PyrI chains organized as three dimers (R2).

It catalyses the reaction carbamoyl phosphate + L-aspartate = N-carbamoyl-L-aspartate + phosphate + H(+). The protein operates within pyrimidine metabolism; UMP biosynthesis via de novo pathway; (S)-dihydroorotate from bicarbonate: step 2/3. Its function is as follows. Catalyzes the condensation of carbamoyl phosphate and aspartate to form carbamoyl aspartate and inorganic phosphate, the committed step in the de novo pyrimidine nucleotide biosynthesis pathway. This is Aspartate carbamoyltransferase catalytic subunit from Chlorobium phaeovibrioides (strain DSM 265 / 1930) (Prosthecochloris vibrioformis (strain DSM 265)).